A 278-amino-acid chain; its full sequence is Diaminopimelate epimerase (278 aa).

Substrate-binding residues include Asn-13, Gln-46, and Asn-67. Cys-76 serves as the catalytic Proton donor. Substrate contacts are provided by residues 77–78 (GN), Asn-160, Asn-193, and 211–212 (ER). Cys-220 acts as the Proton acceptor in catalysis. 221 to 222 (GT) serves as a coordination point for substrate.

It belongs to the diaminopimelate epimerase family. Homodimer.

The protein localises to the cytoplasm. It catalyses the reaction (2S,6S)-2,6-diaminopimelate = meso-2,6-diaminopimelate. It functions in the pathway amino-acid biosynthesis; L-lysine biosynthesis via DAP pathway; DL-2,6-diaminopimelate from LL-2,6-diaminopimelate: step 1/1. Functionally, catalyzes the stereoinversion of LL-2,6-diaminopimelate (L,L-DAP) to meso-diaminopimelate (meso-DAP), a precursor of L-lysine and an essential component of the bacterial peptidoglycan. The sequence is that of Diaminopimelate epimerase from Thioalkalivibrio sulfidiphilus (strain HL-EbGR7).